We begin with the raw amino-acid sequence, 299 residues long: Prohibitin-2 (299 aa).

At alanine 2 the chain carries N-acetylalanine. The interval 19-49 (MGTALKLLLGAGAVAYGIRESVFTVEGGHRA) is necessary for transcriptional repression. Phosphotyrosine is present on tyrosine 128. Lysine 147 carries the post-translational modification N6-acetyllysine. The interval 150–174 (ASQLITQRAQVSLLIRRELTERAKD) is necessary for transcriptional repression. Serine 151 is modified (phosphoserine). Residues 190-238 (SREYTAAVEAKQVAQQEAQRAQFLVEKAKQEQRQKIVQAEGEAEAARML) adopt a coiled-coil conformation. Residues lysine 200, lysine 250, and lysine 262 each carry the N6-acetyllysine modification.

It belongs to the prohibitin family. In terms of assembly, the mitochondrial prohibitin complex consists of two subunits (PHB1 and PHB2), assembled into a membrane-associated ring-shaped supercomplex of approximately 1 mDa. Interacts with ESR1, HDAC1 and HDAC5. Interacts with ZNF703. Interacts with STOML2. Interacts with ARFGEF3. Interacts with SPHK2. Interacts with COX4I1; the interaction associates PHB2 with COX. Interacts with MAP1LC3B (membrane-bound form LC3-II); the interaction is direct and upon mitochondrial depolarization and proteasome-dependent outer membrane rupture. Interacts with IGFBP6 (via C-terminal domain). Interacts with CLPB. Interacts with CD86 (via cytoplasmic domain); the interactions increases after priming with CD40. Interacts with AFG3L2. Interacts with DNAJC19. Interacts with AKT2; this interaction may be important for myogenic differentiation. In terms of processing, phosphorylated. Tyrosine phosphorylation is indirectly stimulated by IGFBP6.

It localises to the mitochondrion inner membrane. The protein resides in the cytoplasm. It is found in the nucleus. Its subcellular location is the cell membrane. Protein with pleiotropic attributes mediated in a cell-compartment- and tissue-specific manner, which include the plasma membrane-associated cell signaling functions, mitochondrial chaperone, and transcriptional co-regulator of transcription factors and sex steroid hormones in the nucleus. Its function is as follows. In the mitochondria, together with PHB, forms large ring complexes (prohibitin complexes) in the inner mitochondrial membrane (IMM) and functions as a chaperone protein that stabilizes mitochondrial respiratory enzymes and maintains mitochondrial integrity in the IMM, which is required for mitochondrial morphogenesis, neuronal survival, and normal lifespan. The prohibitin complex, with DNAJC19, regulates cardiolipin remodeling and the protein turnover of OMA1 in a cardiolipin-binding manner. Also regulates cytochrome-c oxidase assembly (COX) and mitochondrial respiration. Binding to sphingoid 1-phosphate (SPP) modulates its regulator activity. Has a key role of mitophagy receptor involved in targeting mitochondria for autophagic degradation. Involved in mitochondrial-mediated antiviral innate immunity, activates RIG-I-mediated signal transduction and production of IFNB1 and pro-inflammatory cytokine IL6. Functionally, in the nucleus, serves as transcriptional co-regulator. Acts as a mediator of transcriptional repression by nuclear hormone receptors via recruitment of histone deacetylases. Functions as an estrogen receptor (ER)-selective coregulator that potentiates the inhibitory activities of antiestrogens and represses the activity of estrogens. Competes with NCOA1 for modulation of ER transcriptional activity. In terms of biological role, in the plasma membrane, is involved in IGFBP6-induced cell migration. Cooperates with CD86 to mediate CD86-signaling in B lymphocytes that regulates the level of IgG1 produced through the activation of distal signaling intermediates. Upon CD40 engagement, required to activate NF-kappa-B signaling pathway via phospholipase C and protein kinase C activation. This chain is Prohibitin-2 (PHB2), found in Bos taurus (Bovine).